We begin with the raw amino-acid sequence, 357 residues long: Glucose-6-phosphatase catalytic subunit 1 (357 aa).

Topologically, residues 1-28 (MEKGMNVLHDFGIQSTHYLQVNYQDSQD) are lumenal. Residues 29-49 (WFILVSVIADLRNAFYVLFPI) form a helical membrane-spanning segment. The Cytoplasmic segment spans residues 50–60 (WFHLREAVGIK). A helical membrane pass occupies residues 61 to 81 (LLWVAVIGDWLNLVFKWILFG). Residues 82–117 (QRPYWWVMDTDYYSNASVPLIKQFPVTCETGPGSPS) lie on the Lumenal side of the membrane. R83 is a substrate binding site. N96 carries N-linked (GlcNAc...) asparagine glycosylation. The chain crosses the membrane as a helical span at residues 118–138 (GHAMGTAGVYYVMVTSTLSMF). H119 (proton donor) is an active-site residue. Topologically, residues 139-147 (RGKKKPTYR) are cytoplasmic. The chain crosses the membrane as a helical span at residues 148–168 (FRCLNVILWLGFWAVQLNVCL). Over 169–170 (SR) the chain is Lumenal. Substrate is bound at residue R170. Residues 171-191 (IYLAAHFPHQVVAGVLSGIAV) form a helical membrane-spanning segment. The Nucleophile role is filled by H176. At 192 to 209 (AETFRHIQSIYNASLKKY) the chain is on the cytoplasmic side. The helical transmembrane segment at 210–230 (FFITFFLLSFAIGFYLLLKGL) threads the bilayer. Over 231–254 (GVDLLWTLEKARRWCERPEWVHID) the chain is Lumenal. A helical membrane pass occupies residues 255–275 (TTPFASLLKNVGTLFGLGLAL). At 276 to 291 (NSSMYRESCKGTLSKW) the chain is on the cytoplasmic side. The chain crosses the membrane as a helical span at residues 292–312 (FPFRLSCIVVSLILLHLFDSL). Over 313-320 (KPPSQIEL) the chain is Lumenal. A helical transmembrane segment spans residues 321 to 341 (IFYVLSFCKSAAVPLASVSLI). Residues 342–357 (PYCLARVLGQPDKKSL) lie on the Cytoplasmic side of the membrane. Positions 354 to 357 (KKSL) match the Prevents secretion from ER motif.

The protein belongs to the glucose-6-phosphatase family.

The protein resides in the endoplasmic reticulum membrane. The enzyme catalyses D-glucose 6-phosphate + H2O = D-glucose + phosphate. It functions in the pathway carbohydrate biosynthesis; gluconeogenesis. Its function is as follows. Hydrolyzes glucose-6-phosphate to glucose in the endoplasmic reticulum. Forms with the glucose-6-phosphate transporter (SLC37A4/G6PT) the complex responsible for glucose production in the terminal step of glycogenolysis and gluconeogenesis. Hence, it is the key enzyme in homeostatic regulation of blood glucose levels. The protein is Glucose-6-phosphatase catalytic subunit 1 (G6PC1) of Felis catus (Cat).